The sequence spans 244 residues: UDP-2,3-diacylglucosamine hydrolase (244 aa).

The Mn(2+) site is built by aspartate 8, histidine 10, aspartate 41, asparagine 79, and histidine 114. A substrate-binding site is contributed by 79-80 (NR). The substrate site is built by aspartate 122, serine 160, asparagine 164, lysine 167, and histidine 195. Positions 195 and 197 each coordinate Mn(2+).

It belongs to the LpxH family. Requires Mn(2+) as cofactor.

It is found in the cell inner membrane. It catalyses the reaction UDP-2-N,3-O-bis[(3R)-3-hydroxytetradecanoyl]-alpha-D-glucosamine + H2O = 2-N,3-O-bis[(3R)-3-hydroxytetradecanoyl]-alpha-D-glucosaminyl 1-phosphate + UMP + 2 H(+). It functions in the pathway glycolipid biosynthesis; lipid IV(A) biosynthesis; lipid IV(A) from (3R)-3-hydroxytetradecanoyl-[acyl-carrier-protein] and UDP-N-acetyl-alpha-D-glucosamine: step 4/6. Hydrolyzes the pyrophosphate bond of UDP-2,3-diacylglucosamine to yield 2,3-diacylglucosamine 1-phosphate (lipid X) and UMP by catalyzing the attack of water at the alpha-P atom. Involved in the biosynthesis of lipid A, a phosphorylated glycolipid that anchors the lipopolysaccharide to the outer membrane of the cell. This chain is UDP-2,3-diacylglucosamine hydrolase, found in Marinobacter nauticus (strain ATCC 700491 / DSM 11845 / VT8) (Marinobacter aquaeolei).